The following is a 451-amino-acid chain: GABA transporter 1 (451 aa).

11 helical membrane-spanning segments follow: residues 35-55 (CGFH…PYAF), 57-77 (FLGW…TFYS), 115-135 (VGPI…LLGG), 153-173 (LFEF…FPSF), 182-202 (LSLL…IYIG), 222-242 (VFGI…GIIP), 262-282 (MCYL…YWAF), 308-328 (FIFL…VVYL), 356-376 (LVVR…LPFF), 382-402 (LLGA…FFNF), and 411-431 (FIFW…VIAM).

This sequence belongs to the amino acid/polyamine transporter 2 family. Amino acid/auxin permease (AAAP) (TC 2.A.18.2) subfamily. Highly expressed in flowers and at lower levels in roots, leaves and stems.

The protein resides in the cell membrane. Functionally, high affinity gamma-aminobutyric acid (GABA) transporter probably involved in GABA uptake into cells. When expressed in a heterologous system (Xenopus oocytes), imports GABA, butylamine, beta- and L-Alanine, 5-aminovaleric acid, 6-aminocaproic acid and 8-aminocaprylic acid, but does not mediate the transport of proline or glycine betaine. The protein is GABA transporter 1 (GAT1) of Arabidopsis thaliana (Mouse-ear cress).